Reading from the N-terminus, the 604-residue chain is MKQLKLTGFVIFFFFLTESLTLPTQPQDVDDVRITQKFIDDNIGYITIIAFAQYIQEASFEEVEMLVKAMTEYRDKCLADRTLPECSKLANEVLLENICAMEGLPQKYNFSHCCHKVDFERRLCFFHNKKADIGLLPPLPTLDPEEKCQTYKNNRESFLNNYVYEVSRRNPFVFAPTLLTVAARFEEMTKTCCEEQEKANCFQTKAEPFIYYLKALSSYQKNACRALMKFGRQILQSINIAILSQKFPKIGFKQLTSLLEDVSSKYDGCCEGDVVQCIRGRSKVMSHICSKQDSISSKIKDCCEKKIPERGECIIYSNKDDRPNDLSLREAKFIESDNVCEKRDADQANFMAEFLYEYSRRHPELSTPELLRIAKVYKDLLKECCNMENPPECYRHAENRFNETTEKSLKIVQRECEHFQNLGKDDLKYHYLINLTKLAPQLSTEELTFLGKEMVMALTTCCTLSEEFACVDNLVDLVLGELCGINENRNINPAVDHCCKTNFAFRRSCFESLEADKTYVPPSTSQGLFTFHADLCQAHNEELQRKKDRFLVNLVKLKPELAGEELWSLLADFTNVVEKCCKAQEPEACFKEESPKLAAKSQAA.

Residues 1 to 21 (MKQLKLTGFVIFFFFLTESLT) form the signal peptide. Albumin domains lie at 22–210 (LPTQ…EPFI), 211–403 (YYLK…RFNE), and 404–598 (TTEK…PKLA). Disulfide bonds link C77-C86, C99-C114, C113-C124, C148-C193, C192-C201, C224-C270, C269-C277, C289-C303, C302-C313, C340-C385, C384-C393, C416-C462, C461-C470, C483-C499, C498-C509, C536-C581, and C580-C589. The N-linked (GlcNAc...) asparagine glycan is linked to N109. Residues 215–319 (ALSSYQKNAC…RGECIIYSNK (105 aa)) form a binding pocket for hydrophobic ligands region. N-linked (GlcNAc...) asparagine glycosylation occurs at N434.

Belongs to the ALB/AFP/VDB family. In terms of assembly, forms a 1:1 complex with Wnt family members; interacts with WNT3A and WNT5A. Interacts with WNT1, WNT2B, WNT3, WNT7A, WNT7B, WNT8, WNT9A, WNT9B, WNT10A and WNT10B. N-glycosylated; more than 90% of the glycans are sialylated.

It is found in the secreted. Functionally, functions as a carrier for hydrophobic molecules in body fluids. Essential for the solubility and activity of lipidated Wnt family members, including WNT1, WNT2B, WNT3, WNT3A, WNT5A, WNT7A, WNT7B, WNT8, WNT9A, WNT9B, WNT10A and WNT10B. Binds vitamin E. May transport vitamin E in body fluids under conditions where the lipoprotein system is not sufficient. May be involved in the transport of vitamin E across the blood-brain barrier. The protein is Afamin (AFM) of Bos taurus (Bovine).